A 178-amino-acid chain; its full sequence is Large ribosomal subunit protein uL6 (178 aa).

It belongs to the universal ribosomal protein uL6 family. Part of the 50S ribosomal subunit.

This protein binds to the 23S rRNA, and is important in its secondary structure. It is located near the subunit interface in the base of the L7/L12 stalk, and near the tRNA binding site of the peptidyltransferase center. This chain is Large ribosomal subunit protein uL6, found in Francisella tularensis subsp. mediasiatica (strain FSC147).